The sequence spans 254 residues: Precorrin-3B C(17)-methyltransferase (254 aa).

It belongs to the precorrin methyltransferase family.

It catalyses the reaction precorrin-3B + S-adenosyl-L-methionine = precorrin-4 + S-adenosyl-L-homocysteine + 3 H(+). Its pathway is cofactor biosynthesis; adenosylcobalamin biosynthesis; cob(II)yrinate a,c-diamide from precorrin-2 (aerobic route): step 3/10. Methyltransferase that catalyzes the methylation of C-17 in precorrin-3B to form precorrin-4. This is Precorrin-3B C(17)-methyltransferase (cobJ) from Sinorhizobium sp.